Here is a 274-residue protein sequence, read N- to C-terminus: 2,3,4,5-tetrahydropyridine-2,6-dicarboxylate N-succinyltransferase (274 aa).

Positions 106 and 143 each coordinate substrate.

The protein belongs to the transferase hexapeptide repeat family. As to quaternary structure, homotrimer.

It is found in the cytoplasm. It carries out the reaction (S)-2,3,4,5-tetrahydrodipicolinate + succinyl-CoA + H2O = (S)-2-succinylamino-6-oxoheptanedioate + CoA. Its pathway is amino-acid biosynthesis; L-lysine biosynthesis via DAP pathway; LL-2,6-diaminopimelate from (S)-tetrahydrodipicolinate (succinylase route): step 1/3. The protein is 2,3,4,5-tetrahydropyridine-2,6-dicarboxylate N-succinyltransferase of Rickettsia rickettsii (strain Sheila Smith).